A 201-amino-acid polypeptide reads, in one-letter code: tRNA (guanine-N(7)-)-methyltransferase (201 aa).

S-adenosyl-L-methionine contacts are provided by Glu33, Glu58, Asp85, and Asp106. Residue Asp106 is part of the active site. Substrate-binding positions include Lys110, Asp142, and Thr180–Glu183.

The protein belongs to the class I-like SAM-binding methyltransferase superfamily. TrmB family.

It carries out the reaction guanosine(46) in tRNA + S-adenosyl-L-methionine = N(7)-methylguanosine(46) in tRNA + S-adenosyl-L-homocysteine. It participates in tRNA modification; N(7)-methylguanine-tRNA biosynthesis. Functionally, catalyzes the formation of N(7)-methylguanine at position 46 (m7G46) in tRNA. This Mesomycoplasma hyopneumoniae (strain J / ATCC 25934 / NCTC 10110) (Mycoplasma hyopneumoniae) protein is tRNA (guanine-N(7)-)-methyltransferase.